The chain runs to 3459 residues: uncharacterized protein (3459 aa).

Positions 158–167 are enriched in acidic residues; the sequence is NDDDWIFNED. Disordered stretches follow at residues 158-230 and 400-447; these read NDDD…NNNN and YGYI…NDEK. Residues 168 to 184 are compositionally biased toward basic and acidic residues; sequence DEKKNKNNDGNDNRYDY. The segment covering 185–201 has biased composition (low complexity); sequence NDLQNNNNNDNNKYDYN. The span at 204–221 shows a compositional bias: basic and acidic residues; sequence DDEKKNKNNDGDDNKYDY. The segment covering 406–443 has biased composition (acidic residues); that stretch reads DNDDGDDYNDDNDNDDNYNDDNYNDDNYNDDNYNDDNY. Residues 771–851 are a coiled coil; that stretch reads VNEKKKGENE…NEMNKDEENE (81 aa). A helical membrane pass occupies residues 1059-1079; sequence LIYMIYLFFTYKKYDLLLMFI. 3 disordered regions span residues 1148–1187, 1399–1467, and 1711–1733; these read RRQEKVLNNKDNNDKNDKNDKNDKNDKNDKNEKNEKNDYD, IPTQ…NDDD, and QKKKGNNQKQNHNYNDDINNKEN. The span at 1404–1463 shows a compositional bias: basic and acidic residues; the sequence is DKNETDEGNKNETDEGDKNETDEGDKNETDEGNKNETEEIYKNETDEGNKNETEEIYKND. 2 consecutive transmembrane segments (helical) span residues 2059–2079 and 2197–2217; these read FLLFQMSLSNCFYIMNNIFFF and IIQCTTYMFLLFFIFSTDFLF. Disordered stretches follow at residues 2582–2644 and 2776–2835; these read IYKD…DNNN and GRIW…DKGD. Residues 2592-2629 are compositionally biased toward acidic residues; the sequence is DNNDDDNINDDDNINDDDNINDDDNNNDDDNNNDDNND. The span at 2779 to 2821 shows a compositional bias: basic and acidic residues; that stretch reads WKREENGEKKKNEKNESEKNERNEKNEKNEKHEKHEKHEKNEK. Residues 2785 to 2820 adopt a coiled-coil conformation; the sequence is GEKKKNEKNESEKNERNEKNEKNEKHEKHEKHEKNE. 2 helical membrane passes run 3229 to 3249 and 3296 to 3316; these read LFIIKEYNNIFLYIYMLSFIL and LLFFFNYIFEQIILFVININS.

The protein resides in the membrane. This is an uncharacterized protein from Plasmodium falciparum (isolate 3D7).